The chain runs to 653 residues: DNA polymerase (653 aa).

It belongs to the DNA polymerase type-B family.

The enzyme catalyses DNA(n) + a 2'-deoxyribonucleoside 5'-triphosphate = DNA(n+1) + diphosphate. Functionally, replicates viral genomic DNA. This chain is DNA polymerase, found in Acidianus convivator (ABV).